The chain runs to 478 residues: Membrane-bound lytic murein transglycosylase F (478 aa).

An N-terminal signal peptide occupies residues 1–22 (MTRFLFAIILGFLLTACQQVTV). The non-LT domain stretch occupies residues 23-257 (EETEYVPHKL…HLNEKYFGHV (235 aa)). The tract at residues 258 to 478 (KRFDYIDTRA…PGTLSPDKPK (221 aa)) is LT domain. Glu-302 is an active-site residue. The segment at 446-478 (SKQQNSDEEEPSDLASEDGPAPVPGTLSPDKPK) is disordered. Acidic residues predominate over residues 451-461 (SDEEEPSDLAS).

This sequence in the N-terminal section; belongs to the bacterial solute-binding protein 3 family. It in the C-terminal section; belongs to the transglycosylase Slt family.

It localises to the cell outer membrane. It carries out the reaction Exolytic cleavage of the (1-&gt;4)-beta-glycosidic linkage between N-acetylmuramic acid (MurNAc) and N-acetylglucosamine (GlcNAc) residues in peptidoglycan, from either the reducing or the non-reducing ends of the peptidoglycan chains, with concomitant formation of a 1,6-anhydrobond in the MurNAc residue.. In terms of biological role, murein-degrading enzyme that degrades murein glycan strands and insoluble, high-molecular weight murein sacculi, with the concomitant formation of a 1,6-anhydromuramoyl product. Lytic transglycosylases (LTs) play an integral role in the metabolism of the peptidoglycan (PG) sacculus. Their lytic action creates space within the PG sacculus to allow for its expansion as well as for the insertion of various structures such as secretion systems and flagella. The polypeptide is Membrane-bound lytic murein transglycosylase F (Shewanella sp. (strain ANA-3)).